Reading from the N-terminus, the 282-residue chain is F-box/SPRY domain-containing protein 1 (282 aa).

The segment at 1 to 32 (MAAAAINAAAPPPPVAPTAPPPPPPPPLSQAS) is disordered. Residues 10 to 28 (APPPPVAPTAPPPPPPPPL) show a composition bias toward pro residues. An F-box domain is found at 29–78 (SQASGRLPSRVLELVFSYLDLPDLRSCGLVCKHWYRCLHGDENSEVWRSL). Residues 88 to 280 (LRTDILCNLP…VTLVYLGKPL (193 aa)) form the B30.2/SPRY domain.

It belongs to the FBXO45/Fsn family. As to quaternary structure, probable component of a E3 ubiquitin ligase complex.

It functions in the pathway protein modification; protein ubiquitination. This Xenopus tropicalis (Western clawed frog) protein is F-box/SPRY domain-containing protein 1 (fbxo45).